The following is a 72-amino-acid chain: Translation initiation factor IF-1 (72 aa).

The 71-residue stretch at 2 to 72 (AKDDVIEVDG…TRGRITYRFK (71 aa)) folds into the S1-like domain.

Belongs to the IF-1 family. In terms of assembly, component of the 30S ribosomal translation pre-initiation complex which assembles on the 30S ribosome in the order IF-2 and IF-3, IF-1 and N-formylmethionyl-tRNA(fMet); mRNA recruitment can occur at any time during PIC assembly.

The protein localises to the cytoplasm. Functionally, one of the essential components for the initiation of protein synthesis. Stabilizes the binding of IF-2 and IF-3 on the 30S subunit to which N-formylmethionyl-tRNA(fMet) subsequently binds. Helps modulate mRNA selection, yielding the 30S pre-initiation complex (PIC). Upon addition of the 50S ribosomal subunit IF-1, IF-2 and IF-3 are released leaving the mature 70S translation initiation complex. The protein is Translation initiation factor IF-1 of Lactococcus lactis subsp. lactis (strain IL1403) (Streptococcus lactis).